Consider the following 417-residue polypeptide: Citrate synthase-related protein DDB_G0287281 (417 aa).

Residues 284–317 (NKNNNNNNNNNNNNNNNNNNNNNNNNSEDDDDDN) form a disordered region. The span at 286–309 (NNNNNNNNNNNNNNNNNNNNNNNN) shows a compositional bias: low complexity.

The protein belongs to the citrate synthase family.

The chain is Citrate synthase-related protein DDB_G0287281 from Dictyostelium discoideum (Social amoeba).